The sequence spans 485 residues: Glycogen synthase (485 aa).

K21 contributes to the ADP-alpha-D-glucose binding site.

This sequence belongs to the glycosyltransferase 1 family. Bacterial/plant glycogen synthase subfamily.

The catalysed reaction is [(1-&gt;4)-alpha-D-glucosyl](n) + ADP-alpha-D-glucose = [(1-&gt;4)-alpha-D-glucosyl](n+1) + ADP + H(+). It functions in the pathway glycan biosynthesis; glycogen biosynthesis. In terms of biological role, synthesizes alpha-1,4-glucan chains using ADP-glucose. This chain is Glycogen synthase, found in Pseudomonas savastanoi pv. phaseolicola (strain 1448A / Race 6) (Pseudomonas syringae pv. phaseolicola (strain 1448A / Race 6)).